We begin with the raw amino-acid sequence, 370 residues long: NADH-quinone oxidoreductase subunit D (370 aa).

The protein belongs to the complex I 49 kDa subunit family. NDH-1 is composed of 14 different subunits. Subunits NuoB, C, D, E, F, and G constitute the peripheral sector of the complex.

It localises to the cell membrane. The catalysed reaction is a quinone + NADH + 5 H(+)(in) = a quinol + NAD(+) + 4 H(+)(out). Its function is as follows. NDH-1 shuttles electrons from NADH, via FMN and iron-sulfur (Fe-S) centers, to quinones in the respiratory chain. The immediate electron acceptor for the enzyme in this species is believed to be a menaquinone. Couples the redox reaction to proton translocation (for every two electrons transferred, four hydrogen ions are translocated across the cytoplasmic membrane), and thus conserves the redox energy in a proton gradient. This chain is NADH-quinone oxidoreductase subunit D, found in Clostridium beijerinckii (strain ATCC 51743 / NCIMB 8052) (Clostridium acetobutylicum).